Consider the following 325-residue polypeptide: Lipid droplet-associated hydrolase (325 aa).

Serine 139 (nucleophile) is an active-site residue. Residues aspartate 271 and histidine 300 each act as charge relay system in the active site.

Belongs to the AB hydrolase superfamily. LDAH family.

The protein resides in the lipid droplet. It is found in the endoplasmic reticulum. The catalysed reaction is a cholesterol ester + H2O = cholesterol + a fatty acid + H(+). In terms of biological role, probable serine lipid hydrolase associated with lipid droplets. Has low cholesterol esterase activity. Appears to lack triglyceride lipase activity. Involved in cholesterol and triglyceride homeostasis; stimulates cellular triglyceride accumulation and cellular cholesterol release. Acts antagonistically with PNPLA2/ATGL in regulation of cellular lipid stores. May regulate triglyceride accumulation indirectly through stimulation of PNPLA2/ATGL ubiquitination and proteasomal degradation. Promotes microtubule-dependent lipid droplet fusion. Highly expressed in macrophage-rich areas in atherosclerotic lesions, suggesting that it could promote cholesterol ester turnover in macrophages. This Rattus norvegicus (Rat) protein is Lipid droplet-associated hydrolase.